We begin with the raw amino-acid sequence, 499 residues long: Gypsy retrotransposon integrase-like protein 1 (499 aa).

One can recognise an Integrase catalytic domain in the interval Lys-113 to Asn-270.

This is Gypsy retrotransposon integrase-like protein 1 (GIN1) from Bos taurus (Bovine).